Consider the following 706-residue polypeptide: Elongation factor G (706 aa).

A tr-type G domain is found at 8–297 (SYVRNIGIGA…AVVDYLPSPN (290 aa)). GTP is bound by residues 17-24 (AHIDAGKT), 95-99 (DTPGH), and 149-152 (NKMD).

This sequence belongs to the TRAFAC class translation factor GTPase superfamily. Classic translation factor GTPase family. EF-G/EF-2 subfamily.

Its subcellular location is the cytoplasm. Functionally, catalyzes the GTP-dependent ribosomal translocation step during translation elongation. During this step, the ribosome changes from the pre-translocational (PRE) to the post-translocational (POST) state as the newly formed A-site-bound peptidyl-tRNA and P-site-bound deacylated tRNA move to the P and E sites, respectively. Catalyzes the coordinated movement of the two tRNA molecules, the mRNA and conformational changes in the ribosome. This chain is Elongation factor G, found in Orientia tsutsugamushi (strain Boryong) (Rickettsia tsutsugamushi).